We begin with the raw amino-acid sequence, 104 residues long: MHVKKGDTVIVNAGKDKGKKGRVLAAYPKKERVLVEGINLVKKHSRPSQANPQGGIVTQEAAIHVSNVSLIDPKSGKATRIGYKVLDNGKKVRYAKKSGEVLDK.

This sequence belongs to the universal ribosomal protein uL24 family. In terms of assembly, part of the 50S ribosomal subunit.

Its function is as follows. One of two assembly initiator proteins, it binds directly to the 5'-end of the 23S rRNA, where it nucleates assembly of the 50S subunit. Functionally, one of the proteins that surrounds the polypeptide exit tunnel on the outside of the subunit. The polypeptide is Large ribosomal subunit protein uL24 (Brevibacillus brevis (strain 47 / JCM 6285 / NBRC 100599)).